The following is a 485-amino-acid chain: Alpha,alpha-trehalose-phosphate synthase [UDP-forming] (485 aa).

2 residues coordinate D-glucose 6-phosphate: Y99 and D153. R290 and K295 together coordinate UDP. The UDP-alpha-D-glucose site is built by R290 and K295. R328 lines the D-glucose 6-phosphate pocket. UDP contacts are provided by residues I367 and 393–397; that span reads LVSYE. UDP-alpha-D-glucose-binding positions include I367 and 389–397; that span reads DGMNLVSYE.

The protein belongs to the glycosyltransferase 20 family.

It carries out the reaction D-glucose 6-phosphate + UDP-alpha-D-glucose = alpha,alpha-trehalose 6-phosphate + UDP + H(+). It participates in carbohydrate biosynthesis. Synthase catalytic subunit of the trehalose synthase complex that catalyzes the production of trehalose from glucose-6-phosphate and UDP-alpha-D-glucose in a two step process. The chain is Alpha,alpha-trehalose-phosphate synthase [UDP-forming] from Zygosaccharomyces rouxii.